A 463-amino-acid chain; its full sequence is tRNA-2-methylthio-N(6)-dimethylallyladenosine synthase (463 aa).

Positions 19–135 constitute an MTTase N-terminal domain; it reads GSYWITTFGC…LESLLNQVDS (117 aa). [4Fe-4S] cluster contacts are provided by Cys28, Cys64, Cys98, Cys170, Cys174, and Cys177. The Radical SAM core domain occupies 156-393; that stretch reads RDSSICGWVN…NSLVENIAKE (238 aa). In terms of domain architecture, TRAM spans 396 to 463; the sequence is QRYKNTSQEI…RPFSLTAKLL (68 aa).

The protein belongs to the methylthiotransferase family. MiaB subfamily. In terms of assembly, monomer. Requires [4Fe-4S] cluster as cofactor.

The protein localises to the cytoplasm. The enzyme catalyses N(6)-dimethylallyladenosine(37) in tRNA + (sulfur carrier)-SH + AH2 + 2 S-adenosyl-L-methionine = 2-methylsulfanyl-N(6)-dimethylallyladenosine(37) in tRNA + (sulfur carrier)-H + 5'-deoxyadenosine + L-methionine + A + S-adenosyl-L-homocysteine + 2 H(+). In terms of biological role, catalyzes the methylthiolation of N6-(dimethylallyl)adenosine (i(6)A), leading to the formation of 2-methylthio-N6-(dimethylallyl)adenosine (ms(2)i(6)A) at position 37 in tRNAs that read codons beginning with uridine. This Prochlorococcus marinus (strain NATL2A) protein is tRNA-2-methylthio-N(6)-dimethylallyladenosine synthase.